A 340-amino-acid chain; its full sequence is Heat-inducible transcription repressor HrcA (340 aa).

Belongs to the HrcA family.

Functionally, negative regulator of class I heat shock genes (grpE-dnaK-dnaJ and groELS operons). Prevents heat-shock induction of these operons. In Burkholderia vietnamiensis (strain G4 / LMG 22486) (Burkholderia cepacia (strain R1808)), this protein is Heat-inducible transcription repressor HrcA.